The primary structure comprises 405 residues: Envelope glycoprotein M (405 aa).

Over 1–17 (MKSSKNDTFVYRTWFKT) the chain is Intravirion. A helical transmembrane segment spans residues 18–38 (LVVYFVMFVMSAVVPITAMFP). Residues 39–76 (NLGYPCYFNALVDYGALNLTNYNLAHHLTPTLYLEPPE) lie on the Virion surface side of the membrane. The chain crosses the membrane as a helical span at residues 77–97 (MFVYITLVFIADCVAFIYYAC). Residues 98–121 (GEVALIKARKKVSGLTDLSAWVSA) lie on the Intravirion side of the membrane. The chain crosses the membrane as a helical span at residues 122 to 142 (VGSPTVLFLAILKLWSIQVFI). At 143-149 (QVLSYKH) the chain is on the virion surface side. A helical membrane pass occupies residues 150-170 (VFLSAFVYFLHFLASVLHACA). Residues 171-192 (CVTRFSPVWVVKAQDNSIPQDT) are Intravirion-facing. A helical transmembrane segment spans residues 193–215 (FLWWVVFYLKPIVTNLYLGCLAL). Residues 216 to 245 (ETLVFSLSVFLALGNSFYFMVGDMVLGAVN) lie on the Virion surface side of the membrane. The chain crosses the membrane as a helical span at residues 246–266 (LFLVLPIFWYILTEVWLASFL). A topological domain (intravirion) is located at residue Arg-267. A helical membrane pass occupies residues 268–288 (HNFGFYCGMFIASIILILPLV). The Virion surface portion of the chain corresponds to 289-299 (RYEAVFVSAKL). The helical transmembrane segment at 300–320 (HTTVAINVAIIPILCSVAMLI) threads the bilayer. Residues 321 to 405 (RICRIFKSMR…TTDSEEEIFP (85 aa)) lie on the Intravirion side of the membrane. Residues 346–405 (LESEPRPRPSRTPSPGRNRRRSSTSSSSSRSTRRQRPVSTQALISSVLPMTTDSEEEIFP) form a disordered region. Polar residues predominate over residues 386–397 (QALISSVLPMTT).

The protein belongs to the herpesviridae glycoprotein M family. In terms of assembly, interacts (via N-terminus) with gN (via N-terminus). The gM-gN heterodimer forms the gCII complex.

It localises to the virion membrane. Its subcellular location is the host Golgi apparatus. The protein resides in the host trans-Golgi network. It is found in the host endosome membrane. The protein localises to the host nucleus inner membrane. In terms of biological role, envelope glycoprotein important for virion assembly and egress. Plays a role in the correct incorporation of gH-gL into virion membrane. Directs the glycoprotein N (gN) to the host trans-Golgi network. This chain is Envelope glycoprotein M, found in Homo sapiens (Human).